The primary structure comprises 274 residues: Urease accessory protein UreD (274 aa).

The protein belongs to the UreD family. In terms of assembly, ureD, UreF and UreG form a complex that acts as a GTP-hydrolysis-dependent molecular chaperone, activating the urease apoprotein by helping to assemble the nickel containing metallocenter of UreC. The UreE protein probably delivers the nickel.

Its subcellular location is the cytoplasm. Its function is as follows. Required for maturation of urease via the functional incorporation of the urease nickel metallocenter. The protein is Urease accessory protein UreD of Thermosynechococcus vestitus (strain NIES-2133 / IAM M-273 / BP-1).